A 169-amino-acid polypeptide reads, in one-letter code: uncharacterized protein (169 aa).

In terms of domain architecture, Nudix hydrolase spans 28–157 (ELHLVIHVCI…EFIPYFFLNQ (130 aa)). Positions 65-87 (AGSALKGETSQQAAEREVQEELG) match the Nudix box motif. 2 residues coordinate Mg(2+): E81 and E85.

This sequence belongs to the Nudix hydrolase family. Mg(2+) is required as a cofactor.

This is an uncharacterized protein from Listeria monocytogenes serovar 1/2a (strain ATCC BAA-679 / EGD-e).